We begin with the raw amino-acid sequence, 1067 residues long: Probable importin-5 homolog (1067 aa).

HEAT repeat units follow at residues 3 to 34 (LQPI…YKNH), 42 to 75 (SFIV…SGNI), 93 to 120 (FAVR…QLVP), 125 to 152 (PEIL…LIGA), 164 to 197 (APHF…STFI), 206 to 243 (VFKP…IAQY), 251 to 286 (NFDM…FAEF), 295 to 347 (LYLE…HCVS), 349 to 381 (GLWE…SSIS), 385 to 425 (EKQI…ASYL), 427 to 466 (REMQ…LDEI), 468 to 508 (PNRV…VDGI), 510 to 553 (EEFT…GLAV), 555 to 596 (KKVF…AQCL), 598 to 658 (EDFI…AMEL), 661 to 703 (HLFP…SKQH), 718 to 757 (FTSR…MDIG), 763 to 826 (ADRI…CIQF), 832 to 869 (PYIA…ENGG), 876 to 909 (YPHI…AAEN), 917 to 960 (FLME…ITNL), 969 to 999 (PQTI…TLIR), 1008 to 1040 (QQYI…LALR), and 1041 to 1064 (SQES…LANF).

Belongs to the importin beta family. Importin beta-3 subfamily.

It localises to the cytoplasm. The protein resides in the nucleus. Functionally, functions in nuclear protein import as nuclear transport receptor. Serves as receptor for nuclear localization signals (NLS) in cargo substrates. This is Probable importin-5 homolog from Dictyostelium discoideum (Social amoeba).